Reading from the N-terminus, the 413-residue chain is MAP kinase-interacting serine/threonine-protein kinase 1 (413 aa).

The tract at residues 1–26 (MGSSEPLPIVDSDKRRKKKRKTRATD) is disordered. At Thr-22 the chain carries Phosphothreonine; by PAK2. Ser-27 is modified (phosphoserine; by PAK2). Residues 37–321 (QLTSELLGEG…AAQVLQHPWV (285 aa)) enclose the Protein kinase domain. ATP is bound by residues 43–51 (LGEGAYAKV) and Lys-66. Asp-158 acts as the Proton acceptor in catalysis. 2 positions are modified to phosphoserine: Ser-168 and Ser-173. A phosphothreonine mark is found at Thr-197, Thr-202, and Thr-332.

This sequence belongs to the protein kinase superfamily. CAMK Ser/Thr protein kinase family. As to quaternary structure, interacts with the C-terminal regions of EIF4G1 and EIF4G2. Also binds to dephosphorylated ERK1 and ERK2, and to the p38 kinases. Requires Mg(2+) as cofactor. In terms of processing, dual phosphorylation of Thr-197 and Thr-202 activates the kinase. Phosphorylation of Thr-332 activates the kinase. MAPK3/ERK1 is one of the kinases which activate MKNK1/MNK1. Phosphorylation by PAK2 leads to a reduced phosphorylation of EIF4G1.

The catalysed reaction is L-seryl-[protein] + ATP = O-phospho-L-seryl-[protein] + ADP + H(+). It catalyses the reaction L-threonyl-[protein] + ATP = O-phospho-L-threonyl-[protein] + ADP + H(+). Its activity is regulated as follows. Phosphorylated and activated by the p38 kinases and kinases in the Erk pathway. In terms of biological role, may play a role in the response to environmental stress and cytokines. Appears to regulate translation by phosphorylating EIF4E, thus increasing the affinity of this protein for the 7-methylguanosine-containing mRNA cap. This chain is MAP kinase-interacting serine/threonine-protein kinase 1 (Mknk1), found in Rattus norvegicus (Rat).